The following is a 186-amino-acid chain: Tetratricopeptide repeat protein 36 (186 aa).

TPR repeat units follow at residues 48–81, 83–115, and 120–153; these read SKAL…LPDR, SAYN…SGGR, and RQSF…GSPF.

Belongs to the TTC36 family.

The polypeptide is Tetratricopeptide repeat protein 36 (Ttc36) (Mus musculus (Mouse)).